A 340-amino-acid chain; its full sequence is Ketol-acid reductoisomerase (NADP(+)) (340 aa).

One can recognise a KARI N-terminal Rossmann domain in the interval 3–183 (INVYYDKDCD…GGGRTGIIET (181 aa)). NADP(+)-binding positions include 26–29 (FGSQ), Ser54, and 84–87 (DELQ). Residue His109 is part of the active site. Residue Gly135 coordinates NADP(+). In terms of domain architecture, KARI C-terminal knotted spans 184–329 (TFKDETETDL…KKLRAMMPWI (146 aa)). The Mg(2+) site is built by Asp192, Glu196, Glu228, and Glu232. Residue Ser253 coordinates substrate.

This sequence belongs to the ketol-acid reductoisomerase family. Mg(2+) serves as cofactor.

It catalyses the reaction (2R)-2,3-dihydroxy-3-methylbutanoate + NADP(+) = (2S)-2-acetolactate + NADPH + H(+). The catalysed reaction is (2R,3R)-2,3-dihydroxy-3-methylpentanoate + NADP(+) = (S)-2-ethyl-2-hydroxy-3-oxobutanoate + NADPH + H(+). The protein operates within amino-acid biosynthesis; L-isoleucine biosynthesis; L-isoleucine from 2-oxobutanoate: step 2/4. Its pathway is amino-acid biosynthesis; L-valine biosynthesis; L-valine from pyruvate: step 2/4. Functionally, involved in the biosynthesis of branched-chain amino acids (BCAA). Catalyzes an alkyl-migration followed by a ketol-acid reduction of (S)-2-acetolactate (S2AL) to yield (R)-2,3-dihydroxy-isovalerate. In the isomerase reaction, S2AL is rearranged via a Mg-dependent methyl migration to produce 3-hydroxy-3-methyl-2-ketobutyrate (HMKB). In the reductase reaction, this 2-ketoacid undergoes a metal-dependent reduction by NADPH to yield (R)-2,3-dihydroxy-isovalerate. This Campylobacter concisus (strain 13826) protein is Ketol-acid reductoisomerase (NADP(+)).